The following is a 173-amino-acid chain: Small ribosomal subunit protein uS5 (173 aa).

The 64-residue stretch at 18-81 folds into the S5 DRBM domain; it reads YVEKLVKLNR…EKAKANMVTF (64 aa).

Belongs to the universal ribosomal protein uS5 family. In terms of assembly, part of the 30S ribosomal subunit. Contacts proteins S4 and S8.

With S4 and S12 plays an important role in translational accuracy. In terms of biological role, located at the back of the 30S subunit body where it stabilizes the conformation of the head with respect to the body. The protein is Small ribosomal subunit protein uS5 of Treponema denticola (strain ATCC 35405 / DSM 14222 / CIP 103919 / JCM 8153 / KCTC 15104).